A 168-amino-acid chain; its full sequence is Large ribosomal subunit protein bL17 (168 aa).

The interval 124-168 (QATGEAEAATKRAAKDAEGSAEVSEAKVDTTKADDEAAAEESKDA) is disordered. A compositionally biased stretch (basic and acidic residues) spans 131 to 168 (AATKRAAKDAEGSAEVSEAKVDTTKADDEAAAEESKDA).

It belongs to the bacterial ribosomal protein bL17 family. In terms of assembly, part of the 50S ribosomal subunit. Contacts protein L32.

This Streptomyces coelicolor (strain ATCC BAA-471 / A3(2) / M145) protein is Large ribosomal subunit protein bL17.